The following is a 719-amino-acid chain: Homeobox protein SIX5 (719 aa).

Low complexity-rich tracts occupy residues 1-22 (MATS…AAAT) and 31-65 (QLLQ…GPGS). 2 disordered regions span residues 1–73 (MATS…VTEV) and 241–287 (WFKN…VASM). Residues 194–253 (GEETVYCFKERSRAALKACYRGNRYPTPDEKRRLATLTGLSLTQVSNWFKNRRQRDRTGT) constitute a DNA-binding region (homeobox). The span at 272-282 (ESSRSPEDLER) shows a compositional bias: basic and acidic residues.

Belongs to the SIX/Sine oculis homeobox family. Probably binds DNA dimer. Interacts with EYA3, and probably EYA1 and EYA2.

It localises to the nucleus. In terms of biological role, transcription factor that is thought to be involved in regulation of organogenesis. May be involved in determination and maintenance of retina formation. Binds a 5'-GGTGTCAG-3' motif present in the ARE regulatory element of ATP1A1. Binds a 5'-TCA[AG][AG]TTNC-3' motif present in the MEF3 element in the myogenin promoter, and in the IGFBP5 promoter. Thought to be regulated by association with Dach and Eya proteins, and seems to be coactivated by EYA1, EYA2 and EYA3. This Mus musculus (Mouse) protein is Homeobox protein SIX5 (Six5).